The sequence spans 512 residues: Maturase K (512 aa).

The protein belongs to the intron maturase 2 family. MatK subfamily.

It localises to the plastid. Its subcellular location is the chloroplast. Functionally, usually encoded in the trnK tRNA gene intron. Probably assists in splicing its own and other chloroplast group II introns. This Oenothera argillicola (Appalachian evening primrose) protein is Maturase K.